Consider the following 188-residue polypeptide: Protein SSX4 (188 aa).

Residues 20-83 enclose the KRAB-related domain; that stretch reads KLRKAFDDIA…KRAADFHGND (64 aa). Residues 116–127 are compositionally biased toward basic and acidic residues; the sequence is PAEEENGLKEVP. Residues 116–167 are disordered; sequence PAEEENGLKEVPEASGPQNDGKQLCPPGNPSTLEKINKTSGPKRGKHAWTHR. A compositionally biased stretch (polar residues) spans 145–155; that stretch reads PSTLEKINKTS. Positions 156–167 are enriched in basic residues; sequence GPKRGKHAWTHR.

The protein belongs to the SSX family.

Functionally, could act as a modulator of transcription. This Homo sapiens (Human) protein is Protein SSX4 (SSX4).